The chain runs to 379 residues: Cobalt-precorrin-5B C(1)-methyltransferase (379 aa).

It belongs to the CbiD family.

The catalysed reaction is Co-precorrin-5B + S-adenosyl-L-methionine = Co-precorrin-6A + S-adenosyl-L-homocysteine. Its pathway is cofactor biosynthesis; adenosylcobalamin biosynthesis; cob(II)yrinate a,c-diamide from sirohydrochlorin (anaerobic route): step 6/10. Its function is as follows. Catalyzes the methylation of C-1 in cobalt-precorrin-5B to form cobalt-precorrin-6A. The protein is Cobalt-precorrin-5B C(1)-methyltransferase of Edwardsiella ictaluri (strain 93-146).